Consider the following 38-residue polypeptide: Large ribosomal subunit protein bL36 (38 aa).

The protein belongs to the bacterial ribosomal protein bL36 family.

This is Large ribosomal subunit protein bL36 from Amoebophilus asiaticus (strain 5a2).